The following is a 201-amino-acid chain: Orotate phosphoribosyltransferase (201 aa).

Position 113–121 (113–121) interacts with 5-phospho-alpha-D-ribose 1-diphosphate; sequence EDIITTGKS. Threonine 117 and arginine 145 together coordinate orotate.

It belongs to the purine/pyrimidine phosphoribosyltransferase family. PyrE subfamily. Homodimer. It depends on Mg(2+) as a cofactor.

The catalysed reaction is orotidine 5'-phosphate + diphosphate = orotate + 5-phospho-alpha-D-ribose 1-diphosphate. It functions in the pathway pyrimidine metabolism; UMP biosynthesis via de novo pathway; UMP from orotate: step 1/2. Functionally, catalyzes the transfer of a ribosyl phosphate group from 5-phosphoribose 1-diphosphate to orotate, leading to the formation of orotidine monophosphate (OMP). The sequence is that of Orotate phosphoribosyltransferase from Helicobacter pylori (strain G27).